The following is a 271-amino-acid chain: Membrane protein insertase YidC 1 (271 aa).

The N-terminal stretch at 1–20 is a signal peptide; the sequence is MKKKLKTFSLILLTGSLLVA. Residue Cys-21 is the site of N-palmitoyl cysteine attachment. Residue Cys-21 is the site of S-diacylglycerol cysteine attachment. A run of 4 helical transmembrane segments spans residues 45-65, 124-144, 163-183, and 201-221; these read IQWLSFNHSIGLGIILFTLII, YASVLPLLIQLPVLWALFQAL, PDPYYILPVLAALFTFLSTWL, and VMPFIILVTSFNFASGVVLYW.

Belongs to the OXA1/ALB3/YidC family. Type 2 subfamily.

It is found in the cell membrane. Its function is as follows. Required for the insertion and/or proper folding and/or complex formation of integral membrane proteins into the membrane. Involved in integration of membrane proteins that insert both dependently and independently of the Sec translocase complex, as well as at least some lipoproteins. This Streptococcus agalactiae serotype V (strain ATCC BAA-611 / 2603 V/R) protein is Membrane protein insertase YidC 1.